We begin with the raw amino-acid sequence, 126 residues long: Histone H2B 3 (126 aa).

The span at 1–12 shows a compositional bias: low complexity; sequence MPEPAKSAPAPK. The segment at 1-34 is disordered; it reads MPEPAKSAPAPKKGSKKAVTKTQKKGDKKRRKTR. Lysine 6 and lysine 13 each carry N6-acetyllysine. Residues 13–34 are compositionally biased toward basic residues; the sequence is KGSKKAVTKTQKKGDKKRRKTR. A Phosphoserine modification is found at serine 15. An N6-acetyllysine mark is found at lysine 16 and lysine 21. O-linked (GlcNAc) serine glycosylation occurs at serine 113. A Glycyl lysine isopeptide (Lys-Gly) (interchain with G-Cter in ubiquitin) cross-link involves residue lysine 121.

The protein belongs to the histone H2B family. In terms of assembly, the nucleosome is a histone octamer containing two molecules each of H2A, H2B, H3 and H4 assembled in one H3-H4 heterotetramer and two H2A-H2B heterodimers. The octamer wraps approximately 147 bp of DNA. Post-translationally, monoubiquitination of Lys-121 by the BRE1 gives a specific tag for epigenetic transcriptional activation and is also prerequisite for histone H3 'Lys-4' and 'Lys-79' methylation. Phosphorylated on Ser-15 during apoptosis; which facilitates apoptotic chromatin condensation. In terms of processing, glcNAcylation at Ser-113 promotes monoubiquitination of Lys-121. It fluctuates in response to extracellular glucose, and associates with transcribed genes.

The protein resides in the nucleus. It is found in the chromosome. In terms of biological role, core component of nucleosome. Nucleosomes wrap and compact DNA into chromatin, limiting DNA accessibility to the cellular machineries which require DNA as a template. Histones thereby play a central role in transcription regulation, DNA repair, DNA replication and chromosomal stability. DNA accessibility is regulated via a complex set of post-translational modifications of histones, also called histone code, and nucleosome remodeling. This chain is Histone H2B 3 (hist2h2l), found in Danio rerio (Zebrafish).